We begin with the raw amino-acid sequence, 301 residues long: Protoheme IX farnesyltransferase 1 (301 aa).

9 helical membrane-spanning segments follow: residues 29–49 (VVAL…PHAV), 51–71 (VQPL…AAAL), 101–121 (ALIF…SLVN), 123–143 (LTAW…TAYL), 150–170 (NIVI…TAVT), 177–197 (ALLL…ALAI), 223–243 (CILL…LVGM), 244–264 (CGPV…YKAW), and 274–294 (LAMQ…MALL).

This sequence belongs to the UbiA prenyltransferase family. Protoheme IX farnesyltransferase subfamily.

It localises to the cell inner membrane. It carries out the reaction heme b + (2E,6E)-farnesyl diphosphate + H2O = Fe(II)-heme o + diphosphate. The protein operates within porphyrin-containing compound metabolism; heme O biosynthesis; heme O from protoheme: step 1/1. Functionally, converts heme B (protoheme IX) to heme O by substitution of the vinyl group on carbon 2 of heme B porphyrin ring with a hydroxyethyl farnesyl side group. This is Protoheme IX farnesyltransferase 1 from Shewanella baltica (strain OS195).